The sequence spans 433 residues: Serine hydroxymethyltransferase (433 aa).

121-123 is a (6S)-5,6,7,8-tetrahydrofolate binding site; the sequence is AHV. N6-(pyridoxal phosphate)lysine is present on K227. A (6S)-5,6,7,8-tetrahydrofolate-binding site is contributed by E243.

Belongs to the SHMT family. In terms of assembly, homodimer. Pyridoxal 5'-phosphate is required as a cofactor.

It localises to the cytoplasm. Its pathway is amino-acid biosynthesis; glycine biosynthesis; glycine from L-serine: step 1/1. Catalyzes the reversible interconversion of serine and glycine with a modified folate serving as the one-carbon carrier. Also exhibits a pteridine-independent aldolase activity toward beta-hydroxyamino acids, producing glycine and aldehydes, via a retro-aldol mechanism. This is Serine hydroxymethyltransferase from Saccharolobus islandicus (strain L.S.2.15 / Lassen #1) (Sulfolobus islandicus).